We begin with the raw amino-acid sequence, 528 residues long: Probable serine/threonine-protein kinase 380R (528 aa).

Residues 70–96 form a disordered region; the sequence is VKIPKSKSPPKVKSPKRKKSPVRRRVS. Basic residues predominate over residues 73–95; sequence PKSKSPPKVKSPKRKKSPVRRRV. One can recognise a Protein kinase domain in the interval 156–507; sequence FTNVKAVGKG…LANVLIHKIF (352 aa). Residues 162 to 170 and lysine 187 contribute to the ATP site; that span reads VGKGSFGTV. The active-site Proton acceptor is aspartate 302.

This sequence belongs to the protein kinase superfamily. Ser/Thr protein kinase family.

It carries out the reaction L-seryl-[protein] + ATP = O-phospho-L-seryl-[protein] + ADP + H(+). The enzyme catalyses L-threonyl-[protein] + ATP = O-phospho-L-threonyl-[protein] + ADP + H(+). This chain is Probable serine/threonine-protein kinase 380R, found in Invertebrate iridescent virus 6 (IIV-6).